Here is a 662-residue protein sequence, read N- to C-terminus: UvrABC system protein B (662 aa).

A Helicase ATP-binding domain is found at 31 to 188 (DNIEGGEKAQ…NDLVDIQFER (158 aa)). Residue 44 to 51 (GATGTGKT) coordinates ATP. Residues 97–120 (YYDYYQPEAYVPSSDTYIEKDSSV) carry the Beta-hairpin motif. One can recognise a Helicase C-terminal domain in the interval 435 to 601 (QIDDLLGEIN…TIKKEIRDLI (167 aa)). In terms of domain architecture, UVR spans 626 to 661 (KELVKKLEKQMQEAVEVLDFELAAQIRDMMLEVKAL).

It belongs to the UvrB family. As to quaternary structure, forms a heterotetramer with UvrA during the search for lesions. Interacts with UvrC in an incision complex.

The protein localises to the cytoplasm. Its function is as follows. The UvrABC repair system catalyzes the recognition and processing of DNA lesions. A damage recognition complex composed of 2 UvrA and 2 UvrB subunits scans DNA for abnormalities. Upon binding of the UvrA(2)B(2) complex to a putative damaged site, the DNA wraps around one UvrB monomer. DNA wrap is dependent on ATP binding by UvrB and probably causes local melting of the DNA helix, facilitating insertion of UvrB beta-hairpin between the DNA strands. Then UvrB probes one DNA strand for the presence of a lesion. If a lesion is found the UvrA subunits dissociate and the UvrB-DNA preincision complex is formed. This complex is subsequently bound by UvrC and the second UvrB is released. If no lesion is found, the DNA wraps around the other UvrB subunit that will check the other stand for damage. This chain is UvrABC system protein B, found in Streptococcus pneumoniae (strain P1031).